We begin with the raw amino-acid sequence, 304 residues long: Peroxisomal membrane protein 13 (304 aa).

Disordered regions lie at residues 1–78 (MASQ…WEQQ) and 258–304 (PRKM…VWGN). 2 stretches are compositionally biased toward polar residues: residues 19 to 44 (NTSG…SGTA) and 56 to 67 (RPNTAANMNSLS). Low complexity predominate over residues 262-279 (QQPPQGPNGLPLPHQPHG).

Belongs to the peroxin-13 family. In terms of assembly, interacts with PEX14; forming the PEX13-PEX14 docking complex. Interacts (via N-terminus) with PEX7, but not with PEX5. Interacts with APEM9 (via N-terminus). In terms of tissue distribution, highly expressed in pollen. Detected in shoots, roots, stems, leaves, inflorescences and emasculated postils. Strongly expressed in both male and female gametophytes during fertilization.

Its subcellular location is the peroxisome membrane. Functionally, component of the PEX13-PEX14 docking complex, a translocon channel that specifically mediates the import of peroxisomal cargo proteins bound to PEX5 receptor. The PEX13-PEX14 docking complex forms a large import pore which can be opened to a diameter of about 9 nm. Mechanistically, PEX5 receptor along with cargo proteins associates with the PEX14 subunit of the PEX13-PEX14 docking complex in the cytosol, leading to the insertion of the receptor into the organelle membrane with the concomitant translocation of the cargo into the peroxisome matrix. Essential for pollen-tube discharge that take place only in the presence of functional peroxisomes in either the male or the female gametophyte. This is Peroxisomal membrane protein 13 from Arabidopsis thaliana (Mouse-ear cress).